We begin with the raw amino-acid sequence, 408 residues long: Peptidase T (408 aa).

His78 contributes to the Zn(2+) binding site. Asp80 is a catalytic residue. A Zn(2+)-binding site is contributed by Asp141. Catalysis depends on Glu175, which acts as the Proton acceptor. Zn(2+)-binding residues include Glu176, Asp198, and His380.

Belongs to the peptidase M20B family. Zn(2+) is required as a cofactor.

The protein resides in the cytoplasm. It catalyses the reaction Release of the N-terminal residue from a tripeptide.. In terms of biological role, cleaves the N-terminal amino acid of tripeptides. This Clostridium botulinum (strain 657 / Type Ba4) protein is Peptidase T.